We begin with the raw amino-acid sequence, 261 residues long: TM2 domain-containing protein 3 (261 aa).

The N-terminal stretch at 1–44 (MEAAAEPLRSVRHLSRVLLFLSQCYILSGDGSLNLEHSQPLAQA) is a signal peptide. At 45–193 (IKDPGPTRTF…RTFPKLLYCN (149 aa)) the chain is on the extracellular side. N-linked (GlcNAc...) asparagine glycosylation is found at N101, N136, N154, N171, N183, and N193. The chain crosses the membrane as a helical span at residues 194–214 (WTGGYKWSTALALSITLGGFG). A TM2 domain is found at 197–244 (GYKWSTALALSITLGGFGADRFYLGQWREGLGKLFSFGGLGIWTLIDV). Residues 215 to 229 (ADRFYLGQWREGLGK) are Cytoplasmic-facing. A helical membrane pass occupies residues 230–250 (LFSFGGLGIWTLIDVLLIGVG). Residues 251–261 (YVGPADGSLYI) lie on the Extracellular side of the membrane.

The protein belongs to the TM2 family.

The protein resides in the membrane. This chain is TM2 domain-containing protein 3 (Tm2d3), found in Mus musculus (Mouse).